Consider the following 376-residue polypeptide: 26S proteasome non-ATPase regulatory subunit 13 (376 aa).

The 168-residue stretch at S171 to P338 folds into the PCI domain.

In terms of assembly, component of the 19S proteasome regulatory particle complex. The 26S proteasome consists of a 20S core particle (CP) and two 19S regulatory subunits (RP). The regulatory particle is made of a lid composed of 9 subunits including PSMD13, a base containing 6 ATPases and few additional components.

Functionally, component of the 26S proteasome, a multiprotein complex involved in the ATP-dependent degradation of ubiquitinated proteins. This complex plays a key role in the maintenance of protein homeostasis by removing misfolded or damaged proteins, which could impair cellular functions, and by removing proteins whose functions are no longer required. Therefore, the proteasome participates in numerous cellular processes, including cell cycle progression, apoptosis, or DNA damage repair. This Gallus gallus (Chicken) protein is 26S proteasome non-ATPase regulatory subunit 13.